The chain runs to 781 residues: Transcription factor Sp3 (781 aa).

The segment covering 1–12 (MTAPEKPVKQEE) has biased composition (basic and acidic residues). Disordered stretches follow at residues 1–53 (MTAP…AAQD) and 65–88 (TCSK…AGAP). Residues 20–31 (SGGGGGGGGGHG) are compositionally biased toward gly residues. Positions 32 to 53 (EYLQQQQQHGNGAVAAAAAAQD) are enriched in low complexity. Residue Ser73 is modified to Phosphoserine. Residue Lys120 forms a Glycyl lysine isopeptide (Lys-Gly) (interchain with G-Cter in SUMO) linkage. A transactivation domain (Gln-rich) region spans residues 138–237 (QYVLPLQNLQ…IPQTGQVQVQ (100 aa)). The interval 301 to 338 (QAMDSSDNSERTGERVSPDINETNTDTDLFVPTSSSSQ) is disordered. The span at 308-317 (NSERTGERVS) shows a compositional bias: basic and acidic residues. The segment covering 320-338 (INETNTDTDLFVPTSSSSQ) has biased composition (polar residues). Residues 350 to 499 (QQNTNSLTTS…TPVQTLTLGQ (150 aa)) form a transactivation domain (Gln-rich) region. The 9aaTAD motif lies at 461–469 (VTWQTFQVQ). Positions 534–620 (IQLHPGENAD…RGTNLGKKKQ (87 aa)) are repressor domain. At Lys551 the chain carries N6-acetyllysine; alternate. Residue Lys551 forms a Glycyl lysine isopeptide (Lys-Gly) (interchain with G-Cter in SUMO); alternate linkage. Residue Lys551 forms a Glycyl lysine isopeptide (Lys-Gly) (interchain with G-Cter in SUMO1); alternate linkage. Lys551 is covalently cross-linked (Glycyl lysine isopeptide (Lys-Gly) (interchain with G-Cter in SUMO2); alternate). Residues Ser563 and Ser566 each carry the phosphoserine modification. Lys593 participates in a covalent cross-link: Glycyl lysine isopeptide (Lys-Gly) (interchain with G-Cter in SUMO2). Residues 621-645 (HICHIPGCGKVYGKTSHLRAHLRWH) form a C2H2-type 1 zinc finger. Ser646 is modified (phosphoserine). 2 consecutive C2H2-type zinc fingers follow at residues 651 to 675 (FVCN…RRTH) and 681 to 703 (FVCP…IKTH).

It belongs to the Sp1 C2H2-type zinc-finger protein family. In terms of assembly, interacts with HLTF; the interaction may be required for basal transcriptional activity of HLTF. Interacts with HDAC1; the interaction deacetylates SP3 and regulates its transcriptional activity. Interacts with HDAC2 (preferably the CK2-phosphorylated form); the interaction deacetylates SP3 and regulates its transcriptional activity. Interacts with MEIS2 isoform 4 and PBX1 isoform PBX1a. Post-translationally, not glycosylated. In terms of processing, acetylated by histone acetyltransferase p300, deacetylated by HDACs. Acetylation/deacetylation states regulate transcriptional activity. Acetylation appears to activate transcription. Alternate sumoylation and acetylation at Lys-551 also control transcriptional activity. Ceramides can also regulate acetylation/deacetylation events through altering the interaction of HDAC with SP3. In vitro, C(18)-ceramides, but not C(16)-ceramides, increase the interaction of HDAC1 with SP3 and enhance the deacetylation of SP3 and the subsequent repression of the TERT promoter. Sumoylated on all isoforms. Sumoylated on 2 sites in longer isoforms with Lys-551 being the major site. Sumoylation at this site promotes nuclear localization to the nuclear periphery, nuclear dots and PML nuclear bodies. Sumoylation on Lys-551 represses the transactivation activity, except for the largest isoform, L-Sp3, which has little effect on transactivation. Alternate sumoylation and acetylation at Lys-551 also control transcriptional activity. In terms of tissue distribution, ubiquitously expressed.

It is found in the nucleus. The protein localises to the PML body. Its function is as follows. Transcriptional factor that can act as an activator or repressor depending on isoform and/or post-translational modifications. Binds to GT and GC boxes promoter elements. Competes with SP1 for the GC-box promoters. Weak activator of transcription but can activate a number of genes involved in different processes such as cell-cycle regulation, hormone-induction and house-keeping. The polypeptide is Transcription factor Sp3 (SP3) (Homo sapiens (Human)).